Here is a 99-residue protein sequence, read N- to C-terminus: Large ribosomal subunit protein uL23 (99 aa).

The protein belongs to the universal ribosomal protein uL23 family. In terms of assembly, part of the 50S ribosomal subunit. Contacts protein L29, and trigger factor when it is bound to the ribosome.

Its function is as follows. One of the early assembly proteins it binds 23S rRNA. One of the proteins that surrounds the polypeptide exit tunnel on the outside of the ribosome. Forms the main docking site for trigger factor binding to the ribosome. This Shewanella loihica (strain ATCC BAA-1088 / PV-4) protein is Large ribosomal subunit protein uL23.